We begin with the raw amino-acid sequence, 80 residues long: UPF0270 protein AHA_0994 (80 aa).

This sequence belongs to the UPF0270 family.

This is UPF0270 protein AHA_0994 from Aeromonas hydrophila subsp. hydrophila (strain ATCC 7966 / DSM 30187 / BCRC 13018 / CCUG 14551 / JCM 1027 / KCTC 2358 / NCIMB 9240 / NCTC 8049).